Here is a 389-residue protein sequence, read N- to C-terminus: Gastricsin (389 aa).

The first 16 residues, 1 to 16 (MKWMVVVLLCLQLLEA), serve as a signal peptide directing secretion. A propeptide spans 17–59 (KVVKVPLKKLKSLRETMKEKGLLEEFLKNHKYDPAQKYRYTDF) (activation peptide). In terms of domain architecture, Peptidase A1 spans 73-386 (YFGEISIGTP…DMGNNRVGFA (314 aa)). Aspartate 91 is an active-site residue. Intrachain disulfides connect cysteine 104-cysteine 109 and cysteine 268-cysteine 272. Aspartate 277 is an active-site residue. The cysteines at positions 311 and 344 are disulfide-linked.

It belongs to the peptidase A1 family.

The protein localises to the secreted. The catalysed reaction is More restricted specificity than pepsin A, but shows preferential cleavage at Tyr-|-Xaa bonds. High activity on hemoglobin.. In terms of biological role, hydrolyzes a variety of proteins. The protein is Gastricsin (PGC) of Rhinolophus ferrumequinum (Greater horseshoe bat).